Reading from the N-terminus, the 406-residue chain is UPF0754 membrane protein CYA_0973 (406 aa).

2 helical membrane-spanning segments follow: residues 1–21 (MALW…YFTN) and 385–405 (IVNL…LFLL).

The protein belongs to the UPF0754 family.

It localises to the cell inner membrane. The sequence is that of UPF0754 membrane protein CYA_0973 from Synechococcus sp. (strain JA-3-3Ab) (Cyanobacteria bacterium Yellowstone A-Prime).